The primary structure comprises 823 residues: Molybdenum cofactor sulfurase (823 aa).

An N6-(pyridoxal phosphate)lysine modification is found at Lys228. Cys392 is an active-site residue. The interval 628–667 (SSTRLAEPRRGLGSRKSPLRPAMPGAFPQDTPTPEAERNP) is disordered. The 176-residue stretch at 644–819 (SPLRPAMPGA…VMVGDVVTPS (176 aa)) folds into the MOSC domain.

It belongs to the class-V pyridoxal-phosphate-dependent aminotransferase family. MOCOS subfamily. The cofactor is pyridoxal 5'-phosphate.

It catalyses the reaction Mo-molybdopterin + L-cysteine + AH2 = thio-Mo-molybdopterin + L-alanine + A + H2O. Its pathway is cofactor biosynthesis; molybdopterin biosynthesis. In terms of biological role, sulfurates the molybdenum cofactor. Sulfation of molybdenum is essential for xanthine dehydrogenase (XDH) and aldehyde oxidase (ADO) enzymes in which molybdenum cofactor is liganded by 1 oxygen and 1 sulfur atom in active form. This Aspergillus niger (strain ATCC MYA-4892 / CBS 513.88 / FGSC A1513) protein is Molybdenum cofactor sulfurase.